The primary structure comprises 217 residues: Pyrrolidone-carboxylate peptidase (217 aa).

Catalysis depends on residues glutamate 78, cysteine 141, and histidine 168.

This sequence belongs to the peptidase C15 family. As to quaternary structure, homotetramer.

The protein localises to the cytoplasm. The enzyme catalyses Release of an N-terminal pyroglutamyl group from a polypeptide, the second amino acid generally not being Pro.. Functionally, removes 5-oxoproline from various penultimate amino acid residues except L-proline. This is Pyrrolidone-carboxylate peptidase from Treponema denticola (strain ATCC 35405 / DSM 14222 / CIP 103919 / JCM 8153 / KCTC 15104).